Here is a 209-residue protein sequence, read N- to C-terminus: Guanylyl cyclase-activating protein 3 (209 aa).

A lipid anchor (N-myristoyl glycine) is attached at glycine 2. Asparagine 3 is modified (deamidated asparagine). 4 EF-hand domains span residues 15–50 (PTQE…QGLN), 52–87 (KANK…IMQE), 88–123 (KMEQ…VQAL), and 130–165 (SPEE…DQDL). Positions 65, 67, 69, 76, 101, 103, 105, 107, 112, 143, 145, 147, 149, and 154 each coordinate Ca(2+). Residues 187-209 (QPDMETDSSKSPDKAGLGKVKMK) are disordered.

Retina.

Its function is as follows. Stimulates guanylyl cyclase 1 (GC1) and GC2 when free calcium ions concentration is low and inhibits guanylyl cyclases when free calcium ions concentration is elevated. This Ca(2+)-sensitive regulation of guanylyl cyclase (GC) is a key event in recovery of the dark state of rod photoreceptors following light exposure. This Homo sapiens (Human) protein is Guanylyl cyclase-activating protein 3 (GUCA1C).